A 105-amino-acid polypeptide reads, in one-letter code: Thioredoxin (105 aa).

The 104-residue stretch at 2–105 folds into the Thioredoxin domain; sequence VKLIESKEAF…KLEATITEFA (104 aa). K3 carries the N6-acetyllysine modification. The residue at position 8 (K8) is an N6-succinyllysine. Residues C32 and C35 each act as nucleophile in the active site. Cysteines 32 and 35 form a disulfide. Position 39 is an N6-acetyllysine (K39). S-nitrosocysteine occurs at positions 62 and 69. The residue at position 73 (C73) is an S-nitrosocysteine; alternate. At K94 the chain carries N6-acetyllysine; alternate. K94 bears the N6-succinyllysine; alternate mark.

It belongs to the thioredoxin family. As to quaternary structure, homodimer; disulfide-linked. Interacts with TXNIP through the redox-active site. Interacts with MAP3K5 and CASP3. Interacts with APEX1; the interaction stimulates the FOS/JUN AP-1 DNA-binding activity in a redox-dependent manner. In the fully reduced protein, both Cys-69 and Cys-73 are nitrosylated in response to nitric oxide (NO). When two disulfide bonds are present in the protein, only Cys-73 is nitrosylated. Cys-73 can serve as donor for nitrosylation of target proteins.

The protein localises to the nucleus. It localises to the cytoplasm. It is found in the secreted. Its function is as follows. Participates in various redox reactions through the reversible oxidation of its active center dithiol to a disulfide and catalyzes dithiol-disulfide exchange reactions. Plays a role in the reversible S-nitrosylation of cysteine residues in target proteins, and thereby contributes to the response to intracellular nitric oxide. Nitrosylates the active site Cys of CASP3 in response to nitric oxide (NO), and thereby inhibits caspase-3 activity. Induces the FOS/JUN AP-1 DNA binding activity in ionizing radiation (IR) cells through its oxidation/reduction status and stimulates AP-1 transcriptional activity. The sequence is that of Thioredoxin (Txn) from Rattus norvegicus (Rat).